We begin with the raw amino-acid sequence, 635 residues long: Protein MICRORCHIDIA 1 (635 aa).

The interval 491–511 (RTVIPDQPPTVNTYNPSPLPS) is disordered. A coiled-coil region spans residues 588-635 (MRCEEYVKKENEVEQTVKSLEKELEEIKSKCAQLALLVDAKKKEMQQV).

Belongs to the MORC ATPase protein family. Homodimer and heterodimer with MORC6. Component of an RNA-directed DNA methylation (RdDM) complex that contains at least MORC6, MORC1/CRT1, MORC2, SWI3D and SUVH9. Binds directly to SUVH2 and SUVH9. Interacts with the resistance proteins RCY1, RPM1, SNC1, RPP8, SSI4 and RPS2. The interactions with various resistance proteins are disrupted when these resistance proteins are activated. Interacts with the PAMP recognition receptor FLS2. It depends on Mg(2+) as a cofactor. Mn(2+) is required as a cofactor. In terms of tissue distribution, expressed constitutively.

The protein localises to the nucleus. It is found in the endosome. In terms of biological role, mediator of defense signaling triggered by distinct classes of R proteins. Required during hypersensitive response (HR) that confers disease resistance to turnip crinkle virus (TCV). Exhibits ATPase activity. Contributes to resistance against Pseudomonas syringae and Hyaloperonospora arabidopsidis, at early stages prior to cytosolic calcium ions Ca(2+) accumulation. Required for pathogen-associated molecular pattern (PAMP)-triggered immunity (PTI), basal resistance, non-host resistance and systemic acquired resistance (SAR). Binds DNA/RNA in a non-specific manner and exhibits endonuclease activity. Probably involved in DNA repair. Required for both RPP8- and SSI4-mediated resistance responses, thus being involved in both TIR- and CC-NB-LRR pathways. Involved in RNA-directed DNA methylation (RdDM) as a component of the RdDM machinery and required for gene silencing. May also be involved in the regulation of chromatin architecture to maintain gene silencing. This is Protein MICRORCHIDIA 1 from Arabidopsis thaliana (Mouse-ear cress).